We begin with the raw amino-acid sequence, 280 residues long: Urease accessory protein UreD (280 aa).

This sequence belongs to the UreD family. In terms of assembly, ureD, UreF and UreG form a complex that acts as a GTP-hydrolysis-dependent molecular chaperone, activating the urease apoprotein by helping to assemble the nickel containing metallocenter of UreC. The UreE protein probably delivers the nickel.

The protein localises to the cytoplasm. Functionally, required for maturation of urease via the functional incorporation of the urease nickel metallocenter. In Mesorhizobium japonicum (strain LMG 29417 / CECT 9101 / MAFF 303099) (Mesorhizobium loti (strain MAFF 303099)), this protein is Urease accessory protein UreD.